Consider the following 461-residue polypeptide: Demethyllactenocin mycarosyltransferase (461 aa).

The disordered stretch occupies residues 1-21 (MAGLRPGAGVPPGTPWPISPG).

It belongs to the UDP-glycosyltransferase family.

The enzyme catalyses dTDP-beta-L-mycarose + demethyllactenocin = demethylmacrocin + dTDP + H(+). In terms of biological role, involved in the biosynthesis of mycarose which is a 6-deoxyhexose sugar required during production of the macrolide antibiotic tylosin. Catalyzes the transfer of L-mycarosyl from dTDP-beta-L-mycarose to demethyllactenocin to yield demethylmacrocin. The protein is Demethyllactenocin mycarosyltransferase (tylCV) of Streptomyces fradiae (Streptomyces roseoflavus).